A 596-amino-acid polypeptide reads, in one-letter code: DNA mismatch repair protein MutL (596 aa).

Belongs to the DNA mismatch repair MutL/HexB family.

In terms of biological role, this protein is involved in the repair of mismatches in DNA. It is required for dam-dependent methyl-directed DNA mismatch repair. May act as a 'molecular matchmaker', a protein that promotes the formation of a stable complex between two or more DNA-binding proteins in an ATP-dependent manner without itself being part of a final effector complex. This Leptospira borgpetersenii serovar Hardjo-bovis (strain L550) protein is DNA mismatch repair protein MutL.